The following is a 640-amino-acid chain: Putative solute carrier organic anion transporter family member 1B7 (640 aa).

Residues 1–16 lie on the Extracellular side of the membrane; that stretch reads MKISTTQIERRFEISS. The helical transmembrane segment at 17–37 threads the bilayer; the sequence is SLVGLIDGSFEIGNLFVIVFV. Over 38 to 49 the chain is Cytoplasmic; it reads SYFGSKLHRPKL. The helical transmembrane segment at 50–70 threads the bilayer; the sequence is IGIGCFLMGTGSILMALPHFF. Residues 71–123 are Extracellular-facing; it reads MGYYRYSKETNIDPSENSTSNLPNCLINQMLSLNRTPSEIIERGCVKESGSHM. A helical transmembrane segment spans residues 124 to 144; the sequence is WIYVFMGNMLRGIGETPIVPL. At 145–159 the chain is on the cytoplasmic side; sequence GISYIDDFAKEGHSS. The helical transmembrane segment at 160–180 threads the bilayer; it reads LYLGTVNVMGMTGLVFAFMLG. Topologically, residues 181 to 211 are extracellular; it reads SLFAKMYVDIGYVDLSTIRITPKDSRWVGAW. A helical membrane pass occupies residues 212–232; it reads WLGFLVSGIVSIISSIPFFFL. The Cytoplasmic portion of the chain corresponds to 233–292; that stretch reads PLNPNKPQKERKVSLFLHVLKTNDKRNQIANLTNRRKYITKNVTGFFQSLKSILTNPLYV. Serine 246 carries the post-translational modification Phosphoserine. The chain crosses the membrane as a helical span at residues 293-313; it reads IFVIFTLLHMSSYIASLTYII. The Extracellular segment spans residues 314 to 329; it reads KMVEQQYGWSASKTNF. Residues 330-350 traverse the membrane as a helical segment; it reads LLGVLALPAVAIGMFSGGYII. Topologically, residues 351–362 are cytoplasmic; that stretch reads KKFKLSLVGLAK. The helical transmembrane segment at 363–383 threads the bilayer; it reads LAFCSATVHLLSQVLYFFLIC. Residues 384–492 are Extracellular-facing; it reads ESKSVAGLTL…CTRKSYVYFV (109 aa). Residues 406-461 enclose the Kazal-like domain; the sequence is DVPLSYCNSECNCDESQWEPVCGNNGITYLSPCLAGCKSSSGNKEPIVFYNCSCVE. Cystine bridges form between cysteine 412/cysteine 442, cysteine 418/cysteine 438, and cysteine 427/cysteine 459. A helical transmembrane segment spans residues 493–513; it reads IQVLDAFLCAVGLTSYSVLVI. Topologically, residues 514–521 are cytoplasmic; it reads RIVQPELK. Residues 522–542 form a helical membrane-spanning segment; the sequence is ALAIGFHSMIMRSLGGILVPI. The Extracellular segment spans residues 543–577; sequence YFGALIDTTCMKWSTNSCGARGACRIYNSTYLGRA. The helical transmembrane segment at 578 to 598 threads the bilayer; the sequence is FFGLKVALIFPVLVLLTVFIF. Residues 599-640 are Cytoplasmic-facing; that stretch reads VVRKKSHGKDTKVLENERQVMDEANLEFLNDSEHFVPSAEEQ. At serine 636 the chain carries Phosphoserine.

The protein belongs to the organo anion transporter (TC 2.A.60) family.

The protein resides in the cell membrane. The polypeptide is Putative solute carrier organic anion transporter family member 1B7 (SLCO1B7) (Homo sapiens (Human)).